The sequence spans 748 residues: Acetyl-CoA decarbonylase/synthase complex subunit beta 1 (748 aa).

Residues Cys480, Cys483, Cys569, and Cys571 each contribute to the [Ni-Fe-S] cluster site.

Belongs to the CdhC family. As to quaternary structure, monomer. The ACDS complex is made up of alpha, epsilon, beta, gamma and delta chains with a probable stoichiometry of (alpha(2)epsilon(2))(4)-beta(8)-(gamma(1)delta(1))(8) (Potential). The cofactor is [Ni-Fe-S] cluster.

It catalyses the reaction Co(I)-[corrinoid Fe-S protein] + acetyl-CoA + H(+) = methyl-Co(III)-[corrinoid Fe-S protein] + CO + CoA. Part of a complex that catalyzes the reversible cleavage of acetyl-CoA, allowing autotrophic growth from CO(2). The alpha-epsilon complex generates CO from CO(2), while the beta subunit (this protein) combines the CO with CoA and a methyl group to form acetyl-CoA. The methyl group, which is incorporated into acetyl-CoA, is transferred to the beta subunit by a corrinoid iron-sulfur protein (the gamma-delta complex). The sequence is that of Acetyl-CoA decarbonylase/synthase complex subunit beta 1 (cdhC1) from Methanocaldococcus jannaschii (strain ATCC 43067 / DSM 2661 / JAL-1 / JCM 10045 / NBRC 100440) (Methanococcus jannaschii).